The sequence spans 492 residues: Cytochrome P450 monooxygenase ATEG_03631 (492 aa).

A helical transmembrane segment spans residues 10 to 30; sequence FATLNPMVVVAIPVFLFVISL. A glycan (N-linked (GlcNAc...) asparagine) is linked at asparagine 309. Heme is bound at residue cysteine 457.

This sequence belongs to the cytochrome P450 family. Heme serves as cofactor.

It is found in the membrane. It participates in secondary metabolite biosynthesis. Functionally, cytochrome P450 monooxygenase; part of the cluster A that mediates the biosynthesis of azasperpyranones, members of the azaphilone family that exhibit anti-cancer activities. Azasperpyranones are synthesized by 2 clusters, A and B. Cluster A is responsible for the production of the polyhydric phenol moiety while the azaphilonoid scaffold is produced by the cluster B. The non-reducing polyketide synthase ATEG_03629 produces 5-methyl orsellinic acid, which is then reduced to 5-methyl orsellinic aldehyde by the NRPS-like protein ATEG_03630. 5-methyl orsellinic aldehyde is then first hydroxylated by the FAD-dependent monooxygenase ATEG_03635 and subsequently hydroxylated by the cytochrome P450 monooxygenase ATEG_03631 to produce the unstable polyhydric phenol precursor of azasperpyranones. On the other hand, the polyketide synthase ATEG_07659 is responsible for producing the 3,5-dimethyloctadienone moiety from acetyl-CoA, three malonyl-CoA, and two S-adenosyl methionines (SAM). The 3,5-dimethyloctadienone moiety is then loaded onto the SAT domain of ATEG_07661 and extended with four malonyl-CoA and one SAM, which leads to the formation of 2,4-dihydroxy-6-(5,7-dimethyl-2-oxo-trans-3-trans-5-nonadienyl)-3-methylbenzaldehyde (compound 8) after reductive release and aldol condensation. The FAD-dependent monooxygenase ATEG_07662 is the next enzyme in the biosynthesis sequence and hydroxylates the side chain at the benzylic position of compound 8. In Aspergillus nidulans, afoF, the ortholog of the FAD-dependent oxygenase ATEG_07660, is the key enzyme for the biosynthesis of asperfuranone by catalyzing the hydroxylation at C-8 of to prevent the formation of a six-membered ring hemiacetal intermediate and thus facilitating the formation of a five-membered ring to produce asperfuranone. In Aspergillus terreus, ATEG_07660 is probably not functional, which leads to the formation of the six-membered ring hemiacetal intermediate presperpyranone instead of asperfuranone. Finally, ATEG_03636 is involved in the condensation of the polyhydric phenol moiety produced by cluster A and the perasperpyranone precursor produced by cluster B, to yield azasperpyranone A. Further modifications of azasperpyranone A result in the production of derivatives, including azasperpyranone B to F. This chain is Cytochrome P450 monooxygenase ATEG_03631, found in Aspergillus terreus (strain NIH 2624 / FGSC A1156).